Consider the following 169-residue polypeptide: Cyclic pyranopterin monophosphate synthase (169 aa).

Substrate is bound by residues leucine 83–histidine 85 and methionine 121–glutamate 122. Aspartate 136 is an active-site residue.

This sequence belongs to the MoaC family. As to quaternary structure, homohexamer; trimer of dimers.

The enzyme catalyses (8S)-3',8-cyclo-7,8-dihydroguanosine 5'-triphosphate = cyclic pyranopterin phosphate + diphosphate. Its pathway is cofactor biosynthesis; molybdopterin biosynthesis. Functionally, catalyzes the conversion of (8S)-3',8-cyclo-7,8-dihydroguanosine 5'-triphosphate to cyclic pyranopterin monophosphate (cPMP). The protein is Cyclic pyranopterin monophosphate synthase of Rhodospirillum centenum (strain ATCC 51521 / SW).